The following is a 631-amino-acid chain: MGKVIGIDLGTTNSCVAVMDGKSAKVIENAEGMRTTPSIVAITDDGERLVGQPAKRQAVTNPERTFFAVKRLIGRRYDDPMVEKDKGLVPYKIVKASNGDAWVEADGKTYSPSQVSAFILQKMKETAEAHLGQKVDQAVITVPAYFNDAQRQATKDAGKIAGLEVLRIINEPTAAALAYGLDKAKTGTIAVYDLGGGTFDVSILEIGDGVFEVKSTNGDTFLGGEDFDMRLVNYLADEFQKEQGIDLRKDKLALQRLKEAAEKAKIELSSTTQTEINLPFITADQSGPKHLTMKLTRAKFEALVDDLVQKTIEPCRKALKDAGLTAGEISEVVLVGGMTRMPKVQEVVKQLFGKEPHKGVNPDEVVAIGAAIQAGVLQGDVKDVLLLDVTPLSLGIETLGGVFTRIIDRNTTIPTKKSQVFSTAEDNQNAVTIRVFQGEREMAADNKMLGQFDLMGIPPAPRGMPQIEVTFDIDANGIVNVSAKDKATGKEQQIRIQASGGLSDSEIDKMVKDAEANAAEDKKRREAVDAKNHADALVHSTEKALAEHGSKVDESERRSIEDALSDLREALKGDDAEAIKAKSNTLAQASMKLGEAMYKQAEAAGGAQQAGKDDVVDAEFTEVDDDKKKSA.

A Phosphothreonine; by autocatalysis modification is found at threonine 198. The tract at residues 602–631 (EAAGGAQQAGKDDVVDAEFTEVDDDKKKSA) is disordered.

The protein belongs to the heat shock protein 70 family.

Acts as a chaperone. This chain is Chaperone protein DnaK, found in Rhodopseudomonas palustris (strain ATCC BAA-98 / CGA009).